Reading from the N-terminus, the 169-residue chain is Peptide methionine sulfoxide reductase MsrA (169 aa).

Cysteine 10 is a catalytic residue.

The protein belongs to the MsrA Met sulfoxide reductase family.

It catalyses the reaction L-methionyl-[protein] + [thioredoxin]-disulfide + H2O = L-methionyl-(S)-S-oxide-[protein] + [thioredoxin]-dithiol. The catalysed reaction is [thioredoxin]-disulfide + L-methionine + H2O = L-methionine (S)-S-oxide + [thioredoxin]-dithiol. In terms of biological role, has an important function as a repair enzyme for proteins that have been inactivated by oxidation. Catalyzes the reversible oxidation-reduction of methionine sulfoxide in proteins to methionine. This is Peptide methionine sulfoxide reductase MsrA from Streptococcus pyogenes serotype M6 (strain ATCC BAA-946 / MGAS10394).